The primary structure comprises 360 residues: Phospho-N-acetylmuramoyl-pentapeptide-transferase (360 aa).

10 helical membrane passes run 27-47 (IVSL…LIAW), 72-92 (PTMG…MWAY), 94-114 (SNPY…VGFI), 132-152 (WKYF…YSIG), 168-188 (IMPQ…VGTS), 199-219 (GLAI…AWAT), 236-256 (AGEL…FLWF), 263-283 (VFMG…IAVL), 288-308 (FLLV…ILQV), and 338-358 (VIVR…ATLK).

It belongs to the glycosyltransferase 4 family. MraY subfamily. It depends on Mg(2+) as a cofactor.

The protein resides in the cell inner membrane. It carries out the reaction UDP-N-acetyl-alpha-D-muramoyl-L-alanyl-gamma-D-glutamyl-meso-2,6-diaminopimeloyl-D-alanyl-D-alanine + di-trans,octa-cis-undecaprenyl phosphate = di-trans,octa-cis-undecaprenyl diphospho-N-acetyl-alpha-D-muramoyl-L-alanyl-D-glutamyl-meso-2,6-diaminopimeloyl-D-alanyl-D-alanine + UMP. The protein operates within cell wall biogenesis; peptidoglycan biosynthesis. Its function is as follows. Catalyzes the initial step of the lipid cycle reactions in the biosynthesis of the cell wall peptidoglycan: transfers peptidoglycan precursor phospho-MurNAc-pentapeptide from UDP-MurNAc-pentapeptide onto the lipid carrier undecaprenyl phosphate, yielding undecaprenyl-pyrophosphoryl-MurNAc-pentapeptide, known as lipid I. The polypeptide is Phospho-N-acetylmuramoyl-pentapeptide-transferase (Yersinia pseudotuberculosis serotype O:1b (strain IP 31758)).